We begin with the raw amino-acid sequence, 337 residues long: Holliday junction branch migration complex subunit RuvB (337 aa).

The large ATPase domain (RuvB-L) stretch occupies residues A4 to Y184. Residues I23, R24, G65, K68, T69, T70, E131–Y133, R174, Y184, and R221 each bind ATP. T69 serves as a coordination point for Mg(2+). Positions N185–E255 are small ATPAse domain (RuvB-S). The segment at S258–D337 is head domain (RuvB-H). Residues R294, R313, and R318 each contribute to the DNA site.

This sequence belongs to the RuvB family. As to quaternary structure, homohexamer. Forms an RuvA(8)-RuvB(12)-Holliday junction (HJ) complex. HJ DNA is sandwiched between 2 RuvA tetramers; dsDNA enters through RuvA and exits via RuvB. An RuvB hexamer assembles on each DNA strand where it exits the tetramer. Each RuvB hexamer is contacted by two RuvA subunits (via domain III) on 2 adjacent RuvB subunits; this complex drives branch migration. In the full resolvosome a probable DNA-RuvA(4)-RuvB(12)-RuvC(2) complex forms which resolves the HJ.

It localises to the cytoplasm. The enzyme catalyses ATP + H2O = ADP + phosphate + H(+). The RuvA-RuvB-RuvC complex processes Holliday junction (HJ) DNA during genetic recombination and DNA repair, while the RuvA-RuvB complex plays an important role in the rescue of blocked DNA replication forks via replication fork reversal (RFR). RuvA specifically binds to HJ cruciform DNA, conferring on it an open structure. The RuvB hexamer acts as an ATP-dependent pump, pulling dsDNA into and through the RuvAB complex. RuvB forms 2 homohexamers on either side of HJ DNA bound by 1 or 2 RuvA tetramers; 4 subunits per hexamer contact DNA at a time. Coordinated motions by a converter formed by DNA-disengaged RuvB subunits stimulates ATP hydrolysis and nucleotide exchange. Immobilization of the converter enables RuvB to convert the ATP-contained energy into a lever motion, pulling 2 nucleotides of DNA out of the RuvA tetramer per ATP hydrolyzed, thus driving DNA branch migration. The RuvB motors rotate together with the DNA substrate, which together with the progressing nucleotide cycle form the mechanistic basis for DNA recombination by continuous HJ branch migration. Branch migration allows RuvC to scan DNA until it finds its consensus sequence, where it cleaves and resolves cruciform DNA. The chain is Holliday junction branch migration complex subunit RuvB from Colwellia psychrerythraea (strain 34H / ATCC BAA-681) (Vibrio psychroerythus).